The primary structure comprises 93 residues: MDASMMAGLDGLPEEDKAKMASMIDQLQLRDSLRMYNSLVERCFVDCVDSFTRKSLQKQEETCVMRCAEKFLKHTMRVGMRFAELNQNAPTQD.

Positions 43 to 67 (CFVDCVDSFTRKSLQKQEETCVMRC) match the Twin CX3C motif motif. Cystine bridges form between C43–C67 and C47–C63.

This sequence belongs to the small Tim family. As to quaternary structure, heterohexamer; composed of 3 copies of TIM9 and 3 copies of TIM10, named soluble 70 kDa complex. The complex associates with the TIM22 component of the TIM22 complex. Interacts with multi-pass transmembrane proteins in transit. Expressed in roots, flowers, young cotyledons and leaves.

It localises to the mitochondrion intermembrane space. Functionally, mitochondrial intermembrane chaperone that participates in the import and insertion of multi-pass transmembrane proteins into the mitochondrial inner membrane. May also be required for the transfer of beta-barrel precursors from the TOM complex to the sorting and assembly machinery (SAM complex) of the outer membrane. Acts as a chaperone-like protein that protects the hydrophobic precursors from aggregation and guide them through the mitochondrial intermembrane space. This is Mitochondrial import inner membrane translocase subunit TIM9 (TIM9) from Arabidopsis thaliana (Mouse-ear cress).